A 316-amino-acid chain; its full sequence is Acetyl-coenzyme A carboxylase carboxyl transferase subunit alpha (316 aa).

One can recognise a CoA carboxyltransferase C-terminal domain in the interval Leu40–Glu293.

It belongs to the AccA family. As to quaternary structure, acetyl-CoA carboxylase is a heterohexamer composed of biotin carboxyl carrier protein (AccB), biotin carboxylase (AccC) and two subunits each of ACCase subunit alpha (AccA) and ACCase subunit beta (AccD).

It is found in the cytoplasm. The enzyme catalyses N(6)-carboxybiotinyl-L-lysyl-[protein] + acetyl-CoA = N(6)-biotinyl-L-lysyl-[protein] + malonyl-CoA. Its pathway is lipid metabolism; malonyl-CoA biosynthesis; malonyl-CoA from acetyl-CoA: step 1/1. Component of the acetyl coenzyme A carboxylase (ACC) complex. First, biotin carboxylase catalyzes the carboxylation of biotin on its carrier protein (BCCP) and then the CO(2) group is transferred by the carboxyltransferase to acetyl-CoA to form malonyl-CoA. This Chelativorans sp. (strain BNC1) protein is Acetyl-coenzyme A carboxylase carboxyl transferase subunit alpha.